We begin with the raw amino-acid sequence, 119 residues long: Beta-2-microglobulin (119 aa).

Positions 1 to 20 (MARFVVVPLLVLLSLFGLEA) are cleaved as a signal peptide. Positions 25-114 (PKIQVYSRYP…VTFSTPKTVK (90 aa)) constitute an Ig-like C1-type domain. A disulfide bridge links C45 with C100.

This sequence belongs to the beta-2-microglobulin family. As to quaternary structure, heterodimer of an alpha chain and a beta chain. Beta-2-microglobulin is the beta-chain of major histocompatibility complex class I molecules.

The protein localises to the secreted. In terms of biological role, component of the class I major histocompatibility complex (MHC). Involved in the presentation of peptide antigens to the immune system. This is Beta-2-microglobulin (B2M) from Saguinus bicolor bicolor (Pied bare-faced tamarin).